We begin with the raw amino-acid sequence, 78 residues long: UPF0291 protein SE_1024 (78 aa).

Positions 53–78 (TKVIDPEGNDVTPEKLKKIQEEKHNK) are disordered. The segment covering 64-78 (TPEKLKKIQEEKHNK) has biased composition (basic and acidic residues).

The protein belongs to the UPF0291 family.

The protein localises to the cytoplasm. This is UPF0291 protein SE_1024 from Staphylococcus epidermidis (strain ATCC 12228 / FDA PCI 1200).